Reading from the N-terminus, the 1405-residue chain is DNA-directed RNA polymerase subunit beta' (1405 aa).

4 residues coordinate Zn(2+): cysteine 71, cysteine 73, cysteine 86, and cysteine 89. 3 residues coordinate Mg(2+): aspartate 462, aspartate 464, and aspartate 466. Residues cysteine 820, cysteine 893, cysteine 900, and cysteine 903 each contribute to the Zn(2+) site.

Belongs to the RNA polymerase beta' chain family. As to quaternary structure, the RNAP catalytic core consists of 2 alpha, 1 beta, 1 beta' and 1 omega subunit. When a sigma factor is associated with the core the holoenzyme is formed, which can initiate transcription. It depends on Mg(2+) as a cofactor. Zn(2+) is required as a cofactor.

It catalyses the reaction RNA(n) + a ribonucleoside 5'-triphosphate = RNA(n+1) + diphosphate. Functionally, DNA-dependent RNA polymerase catalyzes the transcription of DNA into RNA using the four ribonucleoside triphosphates as substrates. This is DNA-directed RNA polymerase subunit beta' from Methylorubrum populi (strain ATCC BAA-705 / NCIMB 13946 / BJ001) (Methylobacterium populi).